The primary structure comprises 231 residues: Ion-translocating oxidoreductase complex subunit E (231 aa).

6 helical membrane-spanning segments follow: residues 18–38 (ALVQ…ATNA), 39–59 (LGLG…ISTL), 63–83 (TPAE…VSAV), 86–106 (LINA…PLIV), 125–145 (ALSA…MFVL), and 182–202 (PFLL…MLAG).

The protein belongs to the NqrDE/RnfAE family. In terms of assembly, the complex is composed of six subunits: RsxA, RsxB, RsxC, RsxD, RsxE and RsxG.

The protein resides in the cell inner membrane. Its function is as follows. Part of a membrane-bound complex that couples electron transfer with translocation of ions across the membrane. Required to maintain the reduced state of SoxR. The protein is Ion-translocating oxidoreductase complex subunit E of Shigella boydii serotype 18 (strain CDC 3083-94 / BS512).